We begin with the raw amino-acid sequence, 147 residues long: Hemoglobin subunit beta-2 (147 aa).

The region spanning 3–147 (HWTAEEKATI…LVAALSHGYF (145 aa)) is the Globin domain. His64 and His93 together coordinate heme b.

It belongs to the globin family. Heterotetramer of two alpha chains and two beta chains. In terms of tissue distribution, red blood cells.

Functionally, this is a larval (tadpole) beta-globin. This Xenopus tropicalis (Western clawed frog) protein is Hemoglobin subunit beta-2 (hbb2).